We begin with the raw amino-acid sequence, 118 residues long: MSIKYSNKINKIRTFALSLVFIGLFIAYLGVFFRENIIIMTTFMMVGFLAVIASTVVYFWIGMLSTKTVQIICPSCDKPTKMLGRVDACMHCNQPLTMDRNLEGKEFDEKYNKKSYKA.

The next 2 helical transmembrane spans lie at 12–32 (IRTF…LGVF) and 43–63 (FMMV…WIGM).

It belongs to the UPF0295 family.

It is found in the cell membrane. The chain is UPF0295 protein BCE33L0445 from Bacillus cereus (strain ZK / E33L).